The following is a 499-amino-acid chain: RNA polymerase sigma factor SigA (499 aa).

Composition is skewed to basic residues over residues M1–Q12 and K77–A87. Disordered regions lie at residues M1–E25 and Q68–L89. The segment at L252 to T322 is sigma-70 factor domain-2. Positions D276–Q279 match the Interaction with polymerase core subunit RpoC motif. The sigma-70 factor domain-3 stretch occupies residues E331–F412. The tract at residues L425 to Q480 is sigma-70 factor domain-4. The segment at residues L453–T472 is a DNA-binding region (H-T-H motif).

This sequence belongs to the sigma-70 factor family. RpoD/SigA subfamily. As to quaternary structure, interacts transiently with the RNA polymerase catalytic core.

The protein resides in the cytoplasm. In terms of biological role, sigma factors are initiation factors that promote the attachment of RNA polymerase to specific initiation sites and are then released. This sigma factor is the primary sigma factor during exponential growth. This Mycoplasma pneumoniae (strain ATCC 29342 / M129 / Subtype 1) (Mycoplasmoides pneumoniae) protein is RNA polymerase sigma factor SigA.